The sequence spans 90 residues: Putative regulatory protein cce_4590 (90 aa).

Belongs to the RemA family.

The sequence is that of Putative regulatory protein cce_4590 from Crocosphaera subtropica (strain ATCC 51142 / BH68) (Cyanothece sp. (strain ATCC 51142)).